A 138-amino-acid polypeptide reads, in one-letter code: Phospholipase A2 homolog mojave toxin acidic chain (138 aa).

The first 40 residues, 1 to 40 (MRALWIVAVLLVGVEGSLVEFETLIMKIAGRSGISYYSSY), serve as a signal peptide directing secretion. 7 disulfide bridges follow: Cys-42–Cys-131, Cys-44–Cys-60, Cys-59–Cys-111, Cys-65–Cys-138, Cys-66–Cys-104, Cys-73–Cys-97, and Cys-91–Cys-102. Positions 81–83 (TYR) are excised as a propeptide. The residue at position 84 (Gln-84) is a Pyrrolidone carboxylic acid. Positions 120-126 (DYKYLRF) are excised as a propeptide.

It belongs to the phospholipase A2 family. Group II subfamily. D49 sub-subfamily. Heterodimer of an acidic and a basic chain. The acidic subunit is non-toxic, without enzymatic activity and comprises 3 peptides that are cross-linked by 5 disulfide bridges. The basic subunit is toxic, has phospholipase A2 activity and is composed of a single chain. The cofactor is Ca(2+). Expressed by the venom gland.

Its subcellular location is the secreted. In terms of biological role, snake venom phospholipase A2 (PLA2) that inhibits neuromuscular transmission by blocking acetylcholine release from the nerve termini. The sequence is that of Phospholipase A2 homolog mojave toxin acidic chain from Crotalus scutulatus scutulatus (Mojave rattlesnake).